A 458-amino-acid polypeptide reads, in one-letter code: Phosphomethylpyrimidine synthase (458 aa).

Residues asparagine 80, methionine 109, tyrosine 139, histidine 175, 195–197 (SRG), 236–239 (DSLR), and glutamate 275 contribute to the substrate site. Histidine 279 provides a ligand contact to Zn(2+). Residue tyrosine 302 participates in substrate binding. Histidine 343 contributes to the Zn(2+) binding site. Residues cysteine 423, cysteine 426, and cysteine 431 each contribute to the [4Fe-4S] cluster site.

It belongs to the ThiC family. Requires [4Fe-4S] cluster as cofactor.

It carries out the reaction 5-amino-1-(5-phospho-beta-D-ribosyl)imidazole + S-adenosyl-L-methionine = 4-amino-2-methyl-5-(phosphooxymethyl)pyrimidine + CO + 5'-deoxyadenosine + formate + L-methionine + 3 H(+). Its pathway is cofactor biosynthesis; thiamine diphosphate biosynthesis. In terms of biological role, catalyzes the synthesis of the hydroxymethylpyrimidine phosphate (HMP-P) moiety of thiamine from aminoimidazole ribotide (AIR) in a radical S-adenosyl-L-methionine (SAM)-dependent reaction. This is Phosphomethylpyrimidine synthase from Acaryochloris marina (strain MBIC 11017).